The primary structure comprises 913 residues: DNA mismatch repair protein MutS (913 aa).

Position 720–727 (720–727 (GPNASGKS)) interacts with ATP.

Belongs to the DNA mismatch repair MutS family.

Its function is as follows. This protein is involved in the repair of mismatches in DNA. It is possible that it carries out the mismatch recognition step. This protein has a weak ATPase activity. This is DNA mismatch repair protein MutS from Prochlorococcus marinus (strain AS9601).